Reading from the N-terminus, the 685-residue chain is Protein argonaute (685 aa).

Residues 1–99 (MNHLGKTEVF…LYPKGRRPLD (99 aa)) are N-terminal domain. Residues 100–176 (PKDPGERSVL…VDPAYRILCE (77 aa)) are linker L1. Residues 169-265 (PAYRILCEMS…HLTGLLVPVL (97 aa)) enclose the PAZ domain. Residues 272–337 (EEEGSLALSL…SKPADALRVG (66 aa)) form a linker L2 region. The mid domain stretch occupies residues 338-463 (FYRAQETALA…LLAKAGLQVV (126 aa)). The tract at residues 464–685 (ALSGAYPAEL…EVDREKLFFV (222 aa)) is PIWI domain. Residues Asp478, Glu512, Asp546, and Asp660 contribute to the active site. Residue Asp478 participates in Mn(2+) binding. The Piwi domain occupies 507-671 (EAQAGERIPQ…LVKEVGRLGI (165 aa)). Residues Asp546, Asp660, and Val685 each coordinate Mn(2+).

The protein belongs to the argonaute family. Long pAgo subfamily. Coimmunoprecipitates with a number of proteins involved in DNA replication or recombination including RepA (initiates replication), AddA/B (TT_C0638 and TT_C0639), ArgR, GyrA/B, HU (TT_C0984), PriA, Rad52 (TT_C1923), RecJ, SSB, TopA and UvrB. Most proteins remain associated with TtAgo after DNase treatment and associate with catalytically inactive protein. It depends on Mn(2+) as a cofactor.

Its function is as follows. A DNA-guided ssDNA endonuclease. Uses short ssDNA sequences as guides (gDNA, also called small interfering DNA, siDNA) to bind complementary DNA target strands, resulting in cleavage of the target DNA (tDNA). The cleavage site is 10 nucleotides (nt) downstream of the target residue base-paired with the 5'-end of the gDNA. Plays a role in completion of DNA replication, participates in decatenating replicated DNA and plasmid. In situ purifies with 5'-phosphorylated long DNA (about 1160 nt, maps to the whole chromosome and plasmid), 25-35 nt RNAs that map to the whole chromosome and 15-18 nt DNA that maps to the replication terminus region (ter) on the chromosome and plasmid. Most short DNA starts with dC. Has been shown to have guide sequence-independent dsDNase activity called 'chopping', which requires unstable DNA (high AT-content, multiple mismatches or low salt conditions), and could be used to generate gDNA. Preferentially binds tDNA with dC at its 3'-terminus. Has also been shown to have no detectable guide sequence-independent dsDNase activity. The latter study proposes TtAgo may acquire gDNA from nicked dsDNA, by binding to 5'-phosphorylated-dC nicks, then cleaving 10 nt away on the opposite strand; subsequently an exonuclease (maybe AddA-AddB helicase/nuclease) trims the ends to generate the gDNA. Functionally, involved in defense against invading mobile genetic elements. TtAgo interferes with plasmid DNA, stimulates expression of specific endogenous genes, including various CRISPR loci and at least part of the CRISPR adaptation machinery, but only when exogenous plasmid DNA is present. Upon purification from E.coli associates with gDNA 13-25 nt long with 5'-phosphorylated ends and with 10-150 nt RNA with 5'-OH. DNA corresponds to the expression plasmid rather than chromosomal DNA; 89% of gDNA starts with dC and 72% has dA in the second position. Endonucleolytically cleaves tDNA with 5'-phosphorylated gDNA but not 5'-phosphorylated gRNA; the active site is involved in processing or binding of ssDNA. Nicks or linearizes supercoiled plasmid target when it has the appropriate gDNA sequences, does not cleave linear tDNA. Positions 4 to 16 of the tDNA need to be base paired to the gDNA for efficient tDNA cleavage. Although the system can support single nucleotide insertions in either the gDNA or tDNA, in all cases cleavage activity is reduced, with a wide range of sequence- and position-specific effects. In terms of biological role, first characterized as a DNA-guided RNA endonuclease. Uses gDNA to bind complementary RNA target strands, resulting in cleavage of the target RNA. The cleavage site is 10 nucleotides (nt) downstream of the target residue base-paired with the 5'-end of the guide DNA. This is Protein argonaute from Thermus thermophilus (strain ATCC BAA-163 / DSM 7039 / HB27).